We begin with the raw amino-acid sequence, 670 residues long: E3 ubiquitin-protein ligase TRAF7 (670 aa).

Disordered regions lie at residues 1–37 (MSSG…FGPA) and 49–97 (GTST…SLHS). Polar residues-rich tracts occupy residues 15–31 (GPSN…TRME) and 49–67 (GTST…STLA). Phosphoserine is present on residues Ser-61, Ser-88, and Ser-91. The RING-type zinc-finger motif lies at 131–165 (CQLCCSVFKDPVITTCGHTFCRRCALKSEKCPVDN). A TRAF-type zinc finger spans residues 222-276 (HEGSCDYRPVRCPNNPSCPPLLRMNLEAHLKECEHIKCPHSKYGCTFIGNQDTYE). WD repeat units follow at residues 394 to 433 (GHQG…KCQK), 437 to 474 (GHDG…KVNT), 477 to 513 (AHDN…LKLK), 515 to 554 (ELTG…CIHV), 557 to 594 (TSGG…QVRT), 597 to 638 (GHVG…CTQT), and 641 to 669 (RHQG…KVWT).

The protein belongs to the WD repeat TRAF7 family. In terms of assembly, homodimer. Interacts with MAP3K3 and promotes the kinase activity of this enzyme. Phosphorylated by MAP3K3. In terms of processing, ubiquitinates itself upon phosphorylation. In terms of tissue distribution, ubiquitously expressed with high levels in skeletal muscle, heart, colon, spleen, kidney, liver and placenta.

It localises to the cytoplasmic vesicle. Its subcellular location is the cytoplasm. The protein resides in the nucleus. The catalysed reaction is S-ubiquitinyl-[E2 ubiquitin-conjugating enzyme]-L-cysteine + [acceptor protein]-L-lysine = [E2 ubiquitin-conjugating enzyme]-L-cysteine + N(6)-ubiquitinyl-[acceptor protein]-L-lysine.. Its pathway is protein modification; protein ubiquitination. E3 ubiquitin and SUMO-protein ligase that plays a role in different biological processes such as innate immunity, inflammation or apoptosis. Potentiates MAP3K3-mediated activation of JUN/AP1 and DDIT3 transcriptional regulators. Negatively regulates MYB transcriptional activity by sequestering it to the cytosol via SUMOylation. Plays a role in the phosphorylation of MAPK1 and/or MAPK3, probably via its interaction with MAP3K3. Negatively regulates RLR-mediated innate immunity by promoting 'Lys-48'-linked ubiquitination of TBK1 through its RING domain to inhibit the cellular antiviral response. Promotes 'Lys-29'-linked polyubiquitination of NEMO/IKBKG and RELA leading to targeting these two proteins to lysosomal degradative pathways, reducing the transcriptional activity of NF-kappa-B. The sequence is that of E3 ubiquitin-protein ligase TRAF7 (TRAF7) from Homo sapiens (Human).